The sequence spans 238 residues: Ribosomal RNA large subunit methyltransferase E (238 aa).

Positions 85, 87, 113, 129, and 153 each coordinate S-adenosyl-L-methionine. Lysine 193 (proton acceptor) is an active-site residue.

The protein belongs to the class I-like SAM-binding methyltransferase superfamily. RNA methyltransferase RlmE family.

It is found in the cytoplasm. It carries out the reaction uridine(2552) in 23S rRNA + S-adenosyl-L-methionine = 2'-O-methyluridine(2552) in 23S rRNA + S-adenosyl-L-homocysteine + H(+). In terms of biological role, specifically methylates the uridine in position 2552 of 23S rRNA at the 2'-O position of the ribose in the fully assembled 50S ribosomal subunit. The protein is Ribosomal RNA large subunit methyltransferase E of Ruegeria sp. (strain TM1040) (Silicibacter sp.).